A 126-amino-acid chain; its full sequence is Fluoride-specific ion channel FluC 2 (126 aa).

4 helical membrane passes run 5–25 (TALTVAIWIGVMLIGGIGSVL), 44–64 (GTLTVNITGAALLGFLAGLAL), 68–88 (AALLAGTGFVGAYTTFSTWML), and 99–119 (MVSALANIVVSVVLGLAAALL). Residues Gly78 and Thr81 each coordinate Na(+).

Belongs to the fluoride channel Fluc/FEX (TC 1.A.43) family.

It localises to the cell membrane. The catalysed reaction is fluoride(in) = fluoride(out). Its activity is regulated as follows. Na(+) is not transported, but it plays an essential structural role and its presence is essential for fluoride channel function. Fluoride-specific ion channel. Important for reducing fluoride concentration in the cell, thus reducing its toxicity. The protein is Fluoride-specific ion channel FluC 2 of Mycobacterium bovis (strain ATCC BAA-935 / AF2122/97).